Reading from the N-terminus, the 326-residue chain is Putative [LysW]-lysine/[LysW]-ornithine hydrolase (326 aa).

Histidine 66 is a Zn(2+) binding site. Residue aspartate 68 is part of the active site. Residue aspartate 90 participates in Zn(2+) binding. Glutamate 117 functions as the Proton acceptor in the catalytic mechanism. The Zn(2+) site is built by glutamate 118, glutamate 139, and histidine 297.

This sequence belongs to the peptidase M20A family. LysK subfamily. Zn(2+) is required as a cofactor. The cofactor is Co(2+).

Its subcellular location is the cytoplasm. The catalysed reaction is [amino-group carrier protein]-C-terminal-gamma-(L-lysyl)-L-glutamate + H2O = [amino-group carrier protein]-C-terminal-L-glutamate + L-lysine. The enzyme catalyses [amino-group carrier protein]-C-terminal-gamma-(L-ornithyl)-L-glutamate + H2O = [amino-group carrier protein]-C-terminal-L-glutamate + L-ornithine. Its pathway is amino-acid biosynthesis; L-lysine biosynthesis via AAA pathway; L-lysine from L-alpha-aminoadipate (Thermus route): step 5/5. The protein operates within amino-acid biosynthesis; L-arginine biosynthesis. Its function is as follows. Catalyzes the release of L-lysine from [LysW]-gamma-L-lysine and the release of L-ornithine from [LysW]-L-ornithine. This chain is Putative [LysW]-lysine/[LysW]-ornithine hydrolase, found in Pyrococcus furiosus (strain ATCC 43587 / DSM 3638 / JCM 8422 / Vc1).